A 121-amino-acid polypeptide reads, in one-letter code: MEAKAIARHLRVTPMKARRVVDLVRGKQATEALAILKFAQQGASEPVYKLVTSAVANARVKADREGQAFDEDALYITEAFVDEGPTMKRFQPRAQGRAYRINKRTSHVTVVVASKDEKGGN.

The protein belongs to the universal ribosomal protein uL22 family. Part of the 50S ribosomal subunit.

In terms of biological role, this protein binds specifically to 23S rRNA; its binding is stimulated by other ribosomal proteins, e.g. L4, L17, and L20. It is important during the early stages of 50S assembly. It makes multiple contacts with different domains of the 23S rRNA in the assembled 50S subunit and ribosome. The globular domain of the protein is located near the polypeptide exit tunnel on the outside of the subunit, while an extended beta-hairpin is found that lines the wall of the exit tunnel in the center of the 70S ribosome. In Micrococcus luteus (strain ATCC 4698 / DSM 20030 / JCM 1464 / CCM 169 / CCUG 5858 / IAM 1056 / NBRC 3333 / NCIMB 9278 / NCTC 2665 / VKM Ac-2230) (Micrococcus lysodeikticus), this protein is Large ribosomal subunit protein uL22.